The chain runs to 215 residues: Autophagy-related protein 101 (215 aa).

The interval 124-147 (PVGKSHHSKLVMDPGEASEERSSR) is disordered.

This sequence belongs to the ATG101 family. Interacts with ATG11 and ATG13A.

Its subcellular location is the cytoplasmic vesicle. It localises to the autophagosome. Its function is as follows. Accessory protein involved in autophagy. Acts as a scaffold protein of the ATG1-ATG13 complex for faithful delivery of autophagic vesicles to the vacuole. Required for selective mitophagy. This chain is Autophagy-related protein 101, found in Arabidopsis thaliana (Mouse-ear cress).